The following is a 1420-amino-acid chain: DNA-directed RNA polymerase subunit beta' (1420 aa).

The Zn(2+) site is built by cysteine 72, cysteine 74, cysteine 87, and cysteine 90. Residues aspartate 462, aspartate 464, and aspartate 466 each contribute to the Mg(2+) site. Zn(2+) is bound by residues cysteine 816, cysteine 896, cysteine 903, and cysteine 906.

This sequence belongs to the RNA polymerase beta' chain family. The RNAP catalytic core consists of 2 alpha, 1 beta, 1 beta' and 1 omega subunit. When a sigma factor is associated with the core the holoenzyme is formed, which can initiate transcription. The cofactor is Mg(2+). It depends on Zn(2+) as a cofactor.

It catalyses the reaction RNA(n) + a ribonucleoside 5'-triphosphate = RNA(n+1) + diphosphate. In terms of biological role, DNA-dependent RNA polymerase catalyzes the transcription of DNA into RNA using the four ribonucleoside triphosphates as substrates. In Blochmanniella floridana, this protein is DNA-directed RNA polymerase subunit beta'.